We begin with the raw amino-acid sequence, 238 residues long: Phosphoribosylaminoimidazole-succinocarboxamide synthase (238 aa).

The protein belongs to the SAICAR synthetase family.

It carries out the reaction 5-amino-1-(5-phospho-D-ribosyl)imidazole-4-carboxylate + L-aspartate + ATP = (2S)-2-[5-amino-1-(5-phospho-beta-D-ribosyl)imidazole-4-carboxamido]succinate + ADP + phosphate + 2 H(+). Its pathway is purine metabolism; IMP biosynthesis via de novo pathway; 5-amino-1-(5-phospho-D-ribosyl)imidazole-4-carboxamide from 5-amino-1-(5-phospho-D-ribosyl)imidazole-4-carboxylate: step 1/2. This chain is Phosphoribosylaminoimidazole-succinocarboxamide synthase, found in Nitrosococcus oceani (strain ATCC 19707 / BCRC 17464 / JCM 30415 / NCIMB 11848 / C-107).